The sequence spans 893 residues: MAARVVLDEFTAPAEKAALLERSRGRIEALFGVGLAVLGALGAEEPLPARIWLQLRGAQEAVHSAKEYIKGICEPELEEKECYPKAMHCIFVGAQSLFLKSLIQDTCADLCVLDTGLLGIRGSAEAVVMARSHIQQFVKLFESNENLPSNQRESEIKREFRQFVEAHADSYTMDLLILPTSLKKELLSLTQGEESLFETDDDVITVGDVRPPEYTQSAATGPSSARDEVVVQEDSRNKARTPVSELTKHMDTVFSSSPDVLFVPVNGLSPDEDALSKDRVCHKRRSSDTEERHTKKQFSLENVPEGELLPDGKGSAGNEVIDLSDPASNSTNLSPDGKDTTEEMEYNILVNFFKTMGYSQEIVEKVIREYGPSTEPLLLLEEIEKENKRLQEDRDFPPCTVYPDASQSRNAGVGSTTNELTADSTPKKAQSHTEQSMVERFSQLPFKDSKHCTSNCKVNSFRTVPVGQKQEIWGSKQNSSCTVDLETDGHSASAASASPKDISFVSRGASGHQQRNPAFPENGFQQQTEPLLPNNTKPACEKRSGSCSSPQPKPNYPPLSPPLPLPQLLPSVTEARLGGSSDHIDSSVTGVQRFRDTLKIPYKLELKNEPGRADLKHIVIDGSNVAITHGLKKFFSCRGIAIAVEYFWKLGNRNITVFVPQWRTRRDPNITEQHFLTQLQELGILSLTPARMVFGERIASHDDRFLLHLADKTGGIIVTNDNFREFVTESVSWREIITKRLLQYTFVGDIFMVPDDPLGRNGPRLEEFLRKEAFLRHMQPLLNALPSVGTFDPGFRSPSTQVANNSHQPPPRIQTSSSPWLPQQSHFTALATLPSMQQNPPLPAQRSSAETSELREALLKIFPDSEQKLKIDQILAAHPYMKDLNALSALVLD.

Residues 59–143 (QEAVHSAKEY…IQQFVKLFES (85 aa)) form the KH-like domain. Residues 213–243 (EYTQSAATGPSSARDEVVVQEDSRNKARTPV) are disordered. The span at 214-223 (YTQSAATGPS) shows a compositional bias: polar residues. A compositionally biased stretch (basic and acidic residues) spans 225–237 (ARDEVVVQEDSRN). T241 carries the post-translational modification Phosphothreonine. Residues S257, S269, and S299 each carry the phosphoserine modification. 3 disordered regions span residues 273–339 (DALS…DGKD), 394–433 (RDFPPCTVYPDASQSRNAGVGSTTNELTADSTPKKAQSHT), and 472–564 (IWGS…PPLP). Composition is skewed to polar residues over residues 405-433 (ASQSRNAGVGSTTNELTADSTPKKAQSHT) and 523-537 (GFQQQTEPLLPNNTK). Residues 551–564 (QPKPNYPPLSPPLP) show a composition bias toward pro residues. A Phosphoserine modification is found at S560. In terms of domain architecture, RNase NYN spans 615-767 (LKHIVIDGSN…LGRNGPRLEE (153 aa)). The segment at 793–820 (PGFRSPSTQVANNSHQPPPRIQTSSSPW) is disordered. A compositionally biased stretch (polar residues) spans 797–820 (SPSTQVANNSHQPPPRIQTSSSPW). Residues 846 to 893 (RSSAETSELREALLKIFPDSEQKLKIDQILAAHPYMKDLNALSALVLD) form a coCUN region.

The protein belongs to the N4BP1 family. In terms of assembly, interacts with NEDD4. Interacts with ITCH (via WW domain 2). In terms of processing, proteolytically cleaved by CASP8 downstream of TLR3 or TLR4, leading to its inactivation. Mainly cleaved at Asp-488 by CASP8. Cleaved by caspase-like protein MALT1, leading to its inactivation. Post-translationally, mono- and polyubiquitinated on the CoCUN region. Monoubiquitinated by NEDD4. Polyubiquitinated, leading to its degradation by the proteasome. Sumoylated with SUMO1, abrogating polyubiquitination and subsequent degradation. Desumoylated by SENP1, leading to accumulation in PML nuclear bodies.

It is found in the cytoplasm. Its subcellular location is the cytosol. It localises to the nucleus. The protein localises to the nucleolus. The protein resides in the PML body. Its activity is regulated as follows. Proteolytic cleavage by CASP8 or MALT1 leads to its inactivation. Potent suppressor of cytokine production that acts as a regulator of innate immune signaling and inflammation. Acts as a key negative regulator of select cytokine and chemokine responses elicited by TRIF-independent Toll-like receptors (TLRs), thereby limiting inflammatory cytokine responses to minor insults. In response to more threatening pathogens, cleaved by CASP8 downstream of TLR3 or TLR4, leading to its inactivation, thereby allowing production of inflammatory cytokines. Acts as a restriction factor against some viruses: restricts viral replication by binding to mRNA viruses and mediating their degradation via its ribonuclease activity. Also acts as an inhibitor of the E3 ubiquitin-protein ligase ITCH: acts by interacting with the second WW domain of ITCH, leading to compete with ITCH's substrates and impairing ubiquitination of substrates. The sequence is that of NEDD4-binding protein 1 from Mus musculus (Mouse).